The sequence spans 450 residues: Proline--tRNA ligase (450 aa).

Belongs to the class-II aminoacyl-tRNA synthetase family. ProS type 2 subfamily. In terms of assembly, homodimer.

The protein resides in the cytoplasm. The catalysed reaction is tRNA(Pro) + L-proline + ATP = L-prolyl-tRNA(Pro) + AMP + diphosphate. Functionally, catalyzes the attachment of proline to tRNA(Pro) in a two-step reaction: proline is first activated by ATP to form Pro-AMP and then transferred to the acceptor end of tRNA(Pro). In Paracoccus denitrificans (strain Pd 1222), this protein is Proline--tRNA ligase.